A 403-amino-acid chain; its full sequence is Acetate kinase (403 aa).

Residue N7 coordinates Mg(2+). K14 contributes to the ATP binding site. R97 is a substrate binding site. Catalysis depends on D154, which acts as the Proton donor/acceptor. ATP contacts are provided by residues 213–217 (HLGNG), 287–289 (DMR), and 335–339 (GIGEN). E388 serves as a coordination point for Mg(2+).

This sequence belongs to the acetokinase family. As to quaternary structure, homodimer. It depends on Mg(2+) as a cofactor. Mn(2+) serves as cofactor.

It is found in the cytoplasm. It carries out the reaction acetate + ATP = acetyl phosphate + ADP. Its pathway is metabolic intermediate biosynthesis; acetyl-CoA biosynthesis; acetyl-CoA from acetate: step 1/2. Functionally, catalyzes the formation of acetyl phosphate from acetate and ATP. Can also catalyze the reverse reaction. The protein is Acetate kinase of Synechococcus sp. (strain JA-2-3B'a(2-13)) (Cyanobacteria bacterium Yellowstone B-Prime).